The primary structure comprises 289 residues: Stress response regulator protein 1 (289 aa).

Residues 77–136 (LDCTNSEMDEEDDFEDDEDDENLGLINPLHHKSSHGQISDYSPLTPFTEPPSASLSKPSF) form a disordered region. Over residues 83 to 98 (EMDEEDDFEDDEDDEN) the composition is skewed to acidic residues. Residues 127-136 (PSASLSKPSF) are compositionally biased toward polar residues. The Response regulatory domain occupies 163–281 (NFLIVDDNII…YDFVMDRIDE (119 aa)). A 4-aspartylphosphate modification is found at Asp-214.

Functionally, required for stress adaptation, morphogenesis and virulence. This chain is Stress response regulator protein 1 (SRR1), found in Scheffersomyces stipitis (strain ATCC 58785 / CBS 6054 / NBRC 10063 / NRRL Y-11545) (Yeast).